The primary structure comprises 103 residues: Histone H4.1 (103 aa).

Residues methionine 1 to glycine 14 show a composition bias toward gly residues. Residues methionine 1–arginine 20 form a disordered region. Lysine 6 carries the post-translational modification N6-acetyl-N6-methyllysine; alternate. Lysine 6, lysine 9, and lysine 13 each carry N6-methyllysine; alternate. Residue lysine 13 is modified to N6-acetyl-N6-methyllysine; alternate. The DNA-binding element occupies lysine 17 to lysine 21. At lysine 92 the chain carries N6-glutaryllysine.

This sequence belongs to the histone H4 family. In terms of assembly, the nucleosome is a histone octamer containing two molecules each of H2A, H2B, H3 and H4 assembled in one H3-H4 heterotetramer and two H2A-H2B heterodimers. The octamer wraps approximately 147 bp of DNA. Glutarylation at Lys-92 (H4K91glu) destabilizes nucleosomes by promoting dissociation of the H2A-H2B dimers from nucleosomes.

It localises to the nucleus. Its subcellular location is the chromosome. In terms of biological role, core component of nucleosome. Nucleosomes wrap and compact DNA into chromatin, limiting DNA accessibility to the cellular machineries which require DNA as a template. Histones thereby play a central role in transcription regulation, DNA repair, DNA replication and chromosomal stability. DNA accessibility is regulated via a complex set of post-translational modifications of histones, also called histone code, and nucleosome remodeling. In Emericella nidulans (strain FGSC A4 / ATCC 38163 / CBS 112.46 / NRRL 194 / M139) (Aspergillus nidulans), this protein is Histone H4.1 (hhfA).